A 256-amino-acid polypeptide reads, in one-letter code: 1-(5-phosphoribosyl)-5-[(5-phosphoribosylamino)methylideneamino] imidazole-4-carboxamide isomerase (256 aa).

The active-site Proton acceptor is D8. Catalysis depends on D129, which acts as the Proton donor.

This sequence belongs to the HisA/HisF family.

It is found in the cytoplasm. The enzyme catalyses 1-(5-phospho-beta-D-ribosyl)-5-[(5-phospho-beta-D-ribosylamino)methylideneamino]imidazole-4-carboxamide = 5-[(5-phospho-1-deoxy-D-ribulos-1-ylimino)methylamino]-1-(5-phospho-beta-D-ribosyl)imidazole-4-carboxamide. Its pathway is amino-acid biosynthesis; L-histidine biosynthesis; L-histidine from 5-phospho-alpha-D-ribose 1-diphosphate: step 4/9. The protein is 1-(5-phosphoribosyl)-5-[(5-phosphoribosylamino)methylideneamino] imidazole-4-carboxamide isomerase of Picosynechococcus sp. (strain ATCC 27264 / PCC 7002 / PR-6) (Agmenellum quadruplicatum).